A 1057-amino-acid polypeptide reads, in one-letter code: Diacylglycerol kinase iota (1057 aa).

Low complexity predominate over residues 15 to 59; it reads AARGPARAPAAAAAAAASPPGPCSGAACAPSAAAGAGAMNPSSSA. 2 disordered regions span residues 15 to 74 and 334 to 358; these read AARG…SSGS and LKAS…MEQE. Residues 337–352 show a composition bias toward basic residues; it reads SNRKKKRTSFKRKASK. Residues 372-507 enclose the DAGKc domain; it reads PLMKPLLVFV…DRWNLHVERN (136 aa). 2 ANK repeats span residues 950–979 and 986–1015; these read DHCS…SELL and TGET…SLRK. Over residues 1014-1024 the composition is skewed to basic and acidic residues; that stretch reads RKTDSKGKTPQ. The tract at residues 1014 to 1033 is disordered; that stretch reads RKTDSKGKTPQERAQQAGDP. Positions 1055–1057 match the PDZ-binding motif; the sequence is TAV.

This sequence belongs to the eukaryotic diacylglycerol kinase family. As to quaternary structure, interacts (via PDZ-binding motif) with DLG4; controls the localization of DGKI to the synapse. Interacts (via PDZ-binding motif) with DLG1. Interacts (via PDZ-binding motif) with DLG2. Interacts (via PDZ-binding motif) with DLG3. May interact with RASGRP3; involved in the regulation of RASGRP3 activity. In terms of tissue distribution, specifically expressed in brain and retina. In brain, highly expressed in hippocampus, caudate nucleus, occipital pole, cerebral cortex, and cerebellum. Also detected in kidney.

The protein localises to the cell projection. Its subcellular location is the axon. It is found in the dendrite. The protein resides in the presynapse. It localises to the postsynapse. The protein localises to the postsynaptic density. Its subcellular location is the synaptic cell membrane. It is found in the cytoplasmic vesicle. The protein resides in the secretory vesicle. It localises to the synaptic vesicle membrane. The protein localises to the cytoplasm. Its subcellular location is the cytosol. It is found in the nucleus. It catalyses the reaction a 1,2-diacyl-sn-glycerol + ATP = a 1,2-diacyl-sn-glycero-3-phosphate + ADP + H(+). The enzyme catalyses 1,2-di-(9Z-octadecenoyl)-sn-glycerol + ATP = 1,2-di-(9Z-octadecenoyl)-sn-glycero-3-phosphate + ADP + H(+). It carries out the reaction 1-octadecanoyl-2-(5Z,8Z,11Z,14Z-eicosatetraenoyl)-sn-glycerol + ATP = 1-octadecanoyl-2-(5Z,8Z,11Z,14Z-eicosatetraenoyl)-sn-glycero-3-phosphate + ADP + H(+). The catalysed reaction is 1-octadecanoyl-2-(9Z,12Z)-octadecadienoyl-sn-glycerol + ATP = 1-octadecanoyl-2-(9Z,12Z-octadecadienoyl)-sn-glycero-3-phosphate + ADP + H(+). It participates in lipid metabolism; glycerolipid metabolism. Diacylglycerol kinase that converts diacylglycerol/DAG into phosphatidic acid/phosphatidate/PA and regulates the respective levels of these two bioactive lipids. Thereby, acts as a central switch between the signaling pathways activated by these second messengers with different cellular targets and opposite effects in numerous biological processes. Has probably no preference for any of the diacylglycerols in terms of the acyl chain composition, especially for the acyl chain at the sn-2 position. By controlling the diacylglycerol/DAG-mediated activation of RASGRP3, negatively regulates the Rap1 signaling pathway. May play a role in presynaptic diacylglycerol/DAG signaling and control neurotransmitter release during metabotropic glutamate receptor-dependent long-term depression. The sequence is that of Diacylglycerol kinase iota from Homo sapiens (Human).